The sequence spans 198 residues: Ras-related protein Rab-34, isoform NARR (198 aa).

Repeat copies occupy residues P7–R15, P16–R24, P25–R33, P34–R42, A43–P51, R52–S60, P61–T69, P70–S78, P79–S87, P88–S96, P97–S105, P106–T114, and P115–S123. The tract at residues P7 to R125 is 13 x 9 AA approximate tandem-repeats of P-R-V-I-V-G-(S/T)-P-R. Residue S13 is modified to Phosphoserine. Residues I37 to R64 form a disordered region. T69 is subject to Phosphothreonine. 3 positions are modified to phosphoserine: S78, S87, and S96. Residues V94–V121 are compositionally biased toward low complexity. A disordered region spans residues V94–I198. S123 is subject to Phosphoserine. Residues R145 to G157 show a composition bias toward basic and acidic residues. Low complexity predominate over residues G161–R178.

May interact with EIF5A and ERF1. Post-translationally, phosphorylated during M-phase.

It is found in the nucleus. It localises to the nucleolus. The polypeptide is Ras-related protein Rab-34, isoform NARR (RAB34) (Homo sapiens (Human)).